A 473-amino-acid polypeptide reads, in one-letter code: mRNA export factor ICP27 homolog (473 aa).

Disordered regions lie at residues 57–81 (QELLTERPSPDSKNSQGDDDSNSIY) and 123–143 (QTKRPHGTGNRKQYHRRNFPM). 4 residues coordinate Zn(2+): cysteine 362, histidine 438, cysteine 442, and cysteine 447. A CHC2-type zinc finger spans residues 362-447 (CKYGTEKRSM…HTRRCSDPAC (86 aa)).

It belongs to the HHV-1 ICP27 protein family. Associates in a complex with RNA, and host export factors NXF1/TAP and ALYREF; these interactions allow nuclear export of viral transcripts.

The protein resides in the host cytoplasm. It is found in the host nucleus. Functionally, multifunctional regulator of the expression of viral genes that mediates nuclear export of viral intronless mRNAs. This immediate early (EI) protein promotes the nuclear export of viral intronless mRNAs by interacting with mRNAs and host NXF1/TAP. The polypeptide is mRNA export factor ICP27 homolog (Gallus gallus (Chicken)).